We begin with the raw amino-acid sequence, 480 residues long: MAASVVCRAATAGAQVLLRARRSPALLRTPALRSTATFAQALQFVPETQVSLLDNGLRVASEQSSQPTCTVGVWIDVGSRFETEKNNGAGYFLEHLAFKGTKNRPGSALEKEVESMGAHLNAYSTREHTAYYIKALSKDLPKAVELLGDIVQNCSLEDSQIEKERDVILREMQENDASMRDVVFNYLHATAFQGTPLAQAVEGPSENVRKLSRADLTEYLSTHYKAPRMVLAAAGGVEHQQLLDLAQKHLGGIPWTYAEDAVPTLTPCRFTGSEIRHRDDALPFAHVAIAVEGPGWASPDNVALQVANAIIGHYDCTYGGGVHLSSPLASGAVANKLCQSFQTFSICYAETGLLGAHFVCDRMKIDDMMFVLQGQWMRLCTSATESEVARGKNILRNALVSHLDGTTPVCEDIGRSLLTYGRRIPLAEWESRIAEVDASVVREICSKYIYDQCPAVAGYGPIEQLPDYNRIRSGMFWLRF.

The transit peptide at Met-1–Ser-34 directs the protein to the mitochondrion. Lys-111 and Lys-138 each carry N6-acetyllysine. The residue at position 163 (Lys-163) is an N6-acetyllysine; alternate. Lys-163 is subject to N6-succinyllysine; alternate. Ser-212 carries the phosphoserine modification. Lys-248 carries the N6-acetyllysine modification.

It belongs to the peptidase M16 family. UQCRC1/QCR1 subfamily. As to quaternary structure, component of the ubiquinol-cytochrome c oxidoreductase (cytochrome b-c1 complex, complex III, CIII), a multisubunit enzyme composed of 11 subunits. The complex is composed of 3 respiratory subunits cytochrome b, cytochrome c1 and Rieske protein UQCRFS1, 2 core protein subunits UQCRC1/QCR1 and UQCRC2/QCR2, and 6 low-molecular weight protein subunits UQCRH/QCR6, UQCRB/QCR7, UQCRQ/QCR8, UQCR10/QCR9, UQCR11/QCR10 and subunit 9, the cleavage product of Rieske protein UQCRFS1. The complex exists as an obligatory dimer and forms supercomplexes (SCs) in the inner mitochondrial membrane with NADH-ubiquinone oxidoreductase (complex I, CI) and cytochrome c oxidase (complex IV, CIV), resulting in different assemblies (supercomplex SCI(1)III(2)IV(1) and megacomplex MCI(2)III(2)IV(2)). Interacts with UQCC6. Interacts with STMP1. As to expression, expressed in brain, including substantia nigra, striatum, cortex and cerebellum, and in spinal cord, heart, kidney, liver and muscle.

Its subcellular location is the mitochondrion inner membrane. In terms of biological role, component of the ubiquinol-cytochrome c oxidoreductase, a multisubunit transmembrane complex that is part of the mitochondrial electron transport chain which drives oxidative phosphorylation. The respiratory chain contains 3 multisubunit complexes succinate dehydrogenase (complex II, CII), ubiquinol-cytochrome c oxidoreductase (cytochrome b-c1 complex, complex III, CIII) and cytochrome c oxidase (complex IV, CIV), that cooperate to transfer electrons derived from NADH and succinate to molecular oxygen, creating an electrochemical gradient over the inner membrane that drives transmembrane transport and the ATP synthase. The cytochrome b-c1 complex catalyzes electron transfer from ubiquinol to cytochrome c, linking this redox reaction to translocation of protons across the mitochondrial inner membrane, with protons being carried across the membrane as hydrogens on the quinol. In the process called Q cycle, 2 protons are consumed from the matrix, 4 protons are released into the intermembrane space and 2 electrons are passed to cytochrome c. The 2 core subunits UQCRC1/QCR1 and UQCRC2/QCR2 are homologous to the 2 mitochondrial-processing peptidase (MPP) subunits beta-MPP and alpha-MPP respectively, and they seem to have preserved their MPP processing properties. May be involved in the in situ processing of UQCRFS1 into the mature Rieske protein and its mitochondrial targeting sequence (MTS)/subunit 9 when incorporated into complex III. Seems to play an important role in the maintenance of proper mitochondrial function in nigral dopaminergic neurons. The sequence is that of Cytochrome b-c1 complex subunit 1, mitochondrial (UQCRC1) from Homo sapiens (Human).